The sequence spans 445 residues: Sporulation-specific glucan 1,3-beta-glucosidase (445 aa).

The first 21 residues, 1–21 (MVSFRGLTTLTLLFTKLVNCN), serve as a signal peptide directing secretion. An N-linked (GlcNAc...) asparagine glycan is attached at N201. Catalysis depends on E233, which acts as the Proton donor. E335 functions as the Nucleophile in the catalytic mechanism.

It belongs to the glycosyl hydrolase 5 (cellulase A) family.

It is found in the secreted. The enzyme catalyses Successive hydrolysis of beta-D-glucose units from the non-reducing ends of (1-&gt;3)-beta-D-glucans, releasing alpha-glucose.. In terms of biological role, probably involved in the processes of spore formation and contributes to ascospore thermoresistance by participating in the morphogenesis of ascospore walls. The enzyme may do this by modifying glucan linkages in the developing ascospore wall, thus strengthening it or lending it plasticity. This is Sporulation-specific glucan 1,3-beta-glucosidase (SPR1) from Saccharomyces cerevisiae (strain ATCC 204508 / S288c) (Baker's yeast).